Reading from the N-terminus, the 300-residue chain is Exonuclease (300 aa).

The catalysed reaction is Exonucleolytic cleavage in the 5'- to 3'-direction to yield nucleoside 5'-phosphates.. Functionally, plays an essential role in phage DNA replication by participating in the removal of DNA-linked RNA primers. Participates also in T7 DNA packaging, host DNA degradation and phage genetic recombination. The sequence is that of Exonuclease from Escherichia phage T7 (Bacteriophage T7).